A 295-amino-acid chain; its full sequence is UDP-N-acetylenolpyruvoylglucosamine reductase (295 aa).

Positions 24-188 constitute an FAD-binding PCMH-type domain; sequence KVGGNAEIFF…LKVIFKINKG (165 aa). Arg-168 is a catalytic residue. Residue Ser-217 is the Proton donor of the active site. Glu-287 is a catalytic residue.

The protein belongs to the MurB family. Requires FAD as cofactor.

It localises to the cytoplasm. It catalyses the reaction UDP-N-acetyl-alpha-D-muramate + NADP(+) = UDP-N-acetyl-3-O-(1-carboxyvinyl)-alpha-D-glucosamine + NADPH + H(+). Its pathway is cell wall biogenesis; peptidoglycan biosynthesis. Its function is as follows. Cell wall formation. The protein is UDP-N-acetylenolpyruvoylglucosamine reductase of Rickettsia rickettsii (strain Iowa).